Consider the following 339-residue polypeptide: Anthranilate phosphoribosyltransferase (339 aa).

5-phospho-alpha-D-ribose 1-diphosphate is bound by residues Gly-80, 83–84 (GD), Thr-88, 90–93 (NIST), 108–116 (KHGNRAMSS), and Ser-120. Gly-80 lines the anthranilate pocket. Residue Ser-92 participates in Mg(2+) binding. Asn-111 provides a ligand contact to anthranilate. Arg-166 is a binding site for anthranilate. Residues Asp-225 and Glu-226 each contribute to the Mg(2+) site.

This sequence belongs to the anthranilate phosphoribosyltransferase family. In terms of assembly, homodimer. Requires Mg(2+) as cofactor.

The catalysed reaction is N-(5-phospho-beta-D-ribosyl)anthranilate + diphosphate = 5-phospho-alpha-D-ribose 1-diphosphate + anthranilate. It participates in amino-acid biosynthesis; L-tryptophan biosynthesis; L-tryptophan from chorismate: step 2/5. Its function is as follows. Catalyzes the transfer of the phosphoribosyl group of 5-phosphorylribose-1-pyrophosphate (PRPP) to anthranilate to yield N-(5'-phosphoribosyl)-anthranilate (PRA). This Chloroflexus aurantiacus (strain ATCC 29366 / DSM 635 / J-10-fl) protein is Anthranilate phosphoribosyltransferase.